The chain runs to 1007 residues: Tolloid-like protein 1 (1007 aa).

Positions 1 to 25 (MNMPSWLIFLLTGWTFCGNFFACGG) are cleaved as a signal peptide. The propeptide occupies 26-142 (LDYDYPNYEN…GKSKKIRIPR (117 aa)). Positions 115 to 139 (SGQENTTANSQKVDNNQSGKSKKIR) are disordered. Over residues 116–133 (GQENTTANSQKVDNNQSG) the composition is skewed to polar residues. In terms of domain architecture, Peptidase M12A spans 143-342 (AATSRTERIW…AQARKLYRCP (200 aa)). Asparagine 164 carries an N-linked (GlcNAc...) asparagine glycan. 4 disulfides stabilise this stretch: cysteine 185–cysteine 341, cysteine 205–cysteine 227, cysteine 207–cysteine 208, and cysteine 344–cysteine 370. Histidine 235 serves as a coordination point for Zn(2+). Residue glutamate 236 is part of the active site. Residues histidine 239 and histidine 245 each coordinate Zn(2+). 2 consecutive CUB domains span residues 344 to 456 (CGET…YEAI) and 457 to 569 (CGGE…FLKE). Residues asparagine 354 and asparagine 385 are each glycosylated (N-linked (GlcNAc...) asparagine). 15 cysteine pairs are disulfide-bonded: cysteine 397/cysteine 419, cysteine 457/cysteine 483, cysteine 510/cysteine 532, cysteine 573/cysteine 585, cysteine 581/cysteine 594, cysteine 596/cysteine 609, cysteine 613/cysteine 639, cysteine 666/cysteine 688, cysteine 729/cysteine 740, cysteine 736/cysteine 749, cysteine 751/cysteine 764, cysteine 769/cysteine 795, cysteine 822/cysteine 844, cysteine 882/cysteine 912, and cysteine 939/cysteine 961. One can recognise an EGF-like 1; calcium-binding domain in the interval 569–610 (EEDECARPDNGGCEQRCVNTLGSYKCSCDPGYELAPDKKSCE). Positions 613–725 (CGGLLTKLNG…KGFRAHFFSD (113 aa)) constitute a CUB 3 domain. Residue asparagine 621 is glycosylated (N-linked (GlcNAc...) asparagine). The region spanning 725 to 765 (DKDECSKDNGGCQHECINTIGSYVCQCRNGFVLHDNKHDCK) is the EGF-like 2; calcium-binding domain. 2 CUB domains span residues 769-881 (CEHR…HSTE) and 882-998 (CGGR…YRSV).

It depends on Zn(2+) as a cofactor.

The protein localises to the secreted. Protease which processes procollagen C-propeptides, such as chordin. Required for the embryonic development. Predominant protease, which in the development, influences dorsal-ventral patterning and skeletogenesis. This is Tolloid-like protein 1 (tll1) from Xenopus laevis (African clawed frog).